The sequence spans 396 residues: Acetate kinase (396 aa).

Position 7 (Asn-7) interacts with Mg(2+). Lys-14 serves as a coordination point for ATP. Residue Arg-91 coordinates substrate. The active-site Proton donor/acceptor is the Asp-148. ATP is bound by residues 208–212 (HLGNG), 283–285 (DFR), and 331–335 (GLGEN). Position 384 (Glu-384) interacts with Mg(2+).

Belongs to the acetokinase family. Homodimer. Mg(2+) serves as cofactor. Mn(2+) is required as a cofactor.

The protein resides in the cytoplasm. The enzyme catalyses acetate + ATP = acetyl phosphate + ADP. It functions in the pathway metabolic intermediate biosynthesis; acetyl-CoA biosynthesis; acetyl-CoA from acetate: step 1/2. In terms of biological role, catalyzes the formation of acetyl phosphate from acetate and ATP. Can also catalyze the reverse reaction. This Alkaliphilus metalliredigens (strain QYMF) protein is Acetate kinase.